The primary structure comprises 38 residues: Toxic protein TimP (38 aa).

Positions 1-20 (MKVRCFCVVLLVSGTLCLHA) form a transmembrane segment.

This sequence belongs to the TimP toxin family.

The protein resides in the cell inner membrane. Toxic component of a probable type I toxin-antitoxin (TA) system. Neutralized by sRNA antitoxin TimR which binds to the 5' UTR of timP mRNA and inhibits translation. When TimP is expressed from its promoter in the absence of antitoxin leads to mild cell stress; overexpression in situ is toxic to the cell and causes membrane leakage. The antitoxin gene is encoded immediately upstream and transcribed divergently from the toxin gene; antitoxin RNA is less stable than timP mRNA. This Salmonella typhimurium (strain SL1344) protein is Toxic protein TimP.